The chain runs to 408 residues: FAD-dependent monooxygenase nscC (408 aa).

The signal sequence occupies residues 1–20 (MASRLPILIIGAGISGLTTA). FAD is bound by residues Glu34 and Ala45. 2 N-linked (GlcNAc...) asparagine glycosylation sites follow: Asn91 and Asn103. FAD is bound at residue Arg119. 2 N-linked (GlcNAc...) asparagine glycosylation sites follow: Asn170 and Asn231. Residues Asp328 and Gly341 each coordinate FAD.

It belongs to the paxM FAD-dependent monooxygenase family. The cofactor is FAD.

It functions in the pathway secondary metabolite biosynthesis. Its function is as follows. FAD-dependent monooxygenase; part of the gene cluster that mediates the biosynthesis of neosartoricin, a prenylated anthracenone that exhibits T-cell antiproliferative activity, suggestive of a physiological role as an immunosuppressive agent. The non-reducing polyketide synthase nscA probably synthesizes and cyclizes the decaketide backbone. The hydrolase nscB then mediates the product release through hydrolysis followed by spontaneous decarboxylation. The prenyltransferase nscD catalyzes the addition of the dimethylallyl group to the aromatic C5. The FAD-dependent monooxygenase nscC is then responsible for the stereospecific hydroxylation at C2. There is no gene encoding O-acetyltransferase in the nsc gene cluster; thus, the last step of 2-O-acetylation leading to neosartoricin may be catalyzed by an unidentified O-acetyltransferase. The sequence is that of FAD-dependent monooxygenase nscC from Aspergillus fumigatus (strain ATCC MYA-4609 / CBS 101355 / FGSC A1100 / Af293) (Neosartorya fumigata).